We begin with the raw amino-acid sequence, 257 residues long: NAD-capped RNA hydrolase NudC (257 aa).

Arg-69 is a substrate binding site. Residues Cys-98 and Cys-101 each contribute to the Zn(2+) site. Residue Glu-111 coordinates substrate. Zn(2+) contacts are provided by Cys-116 and Cys-119. A substrate-binding site is contributed by Tyr-124. A Nudix hydrolase domain is found at 125-248 (PQIAPCIIVA…TVARRLIEDT (124 aa)). A divalent metal cation contacts are provided by Ala-158, Glu-174, and Glu-178. The Nudix box signature appears at 159-180 (GFVEVGETLEQAAAREIFEESR). Residue 192–199 (QPWPFPHS) participates in substrate binding. Glu-219 lines the a divalent metal cation pocket. Residue Ala-241 coordinates substrate.

The protein belongs to the Nudix hydrolase family. NudC subfamily. As to quaternary structure, homodimer. The cofactor is Mg(2+). Mn(2+) is required as a cofactor. Requires Zn(2+) as cofactor.

It carries out the reaction a 5'-end NAD(+)-phospho-ribonucleoside in mRNA + H2O = a 5'-end phospho-adenosine-phospho-ribonucleoside in mRNA + beta-nicotinamide D-ribonucleotide + 2 H(+). It catalyses the reaction NAD(+) + H2O = beta-nicotinamide D-ribonucleotide + AMP + 2 H(+). The enzyme catalyses NADH + H2O = reduced beta-nicotinamide D-ribonucleotide + AMP + 2 H(+). MRNA decapping enzyme that specifically removes the nicotinamide adenine dinucleotide (NAD) cap from a subset of mRNAs by hydrolyzing the diphosphate linkage to produce nicotinamide mononucleotide (NMN) and 5' monophosphate mRNA. The NAD-cap is present at the 5'-end of some mRNAs and stabilizes RNA against 5'-processing. Has preference for mRNAs with a 5'-end purine. Catalyzes the hydrolysis of a broad range of dinucleotide pyrophosphates. The chain is NAD-capped RNA hydrolase NudC from Edwardsiella ictaluri (strain 93-146).